We begin with the raw amino-acid sequence, 78 residues long: Probable [Fe-S]-dependent transcriptional repressor (78 aa).

Iron-sulfur cluster-binding residues include cysteine 56, cysteine 61, cysteine 64, and cysteine 70.

It belongs to the FeoC family.

In terms of biological role, may function as a transcriptional regulator that controls feoABC expression. This is Probable [Fe-S]-dependent transcriptional repressor from Salmonella agona (strain SL483).